Consider the following 185-residue polypeptide: Ribosome-recycling factor (185 aa).

Belongs to the RRF family.

The protein resides in the cytoplasm. Responsible for the release of ribosomes from messenger RNA at the termination of protein biosynthesis. May increase the efficiency of translation by recycling ribosomes from one round of translation to another. The sequence is that of Ribosome-recycling factor from Laribacter hongkongensis (strain HLHK9).